The following is a 366-amino-acid chain: Structure-specific endonuclease subunit SLX1 (366 aa).

In terms of domain architecture, GIY-YIG spans 14–95 (AFYCCYLLRS…QNTHATRHID (82 aa)). 2 disordered regions span residues 31-59 (IGST…SMQG) and 102-124 (RAEE…KRPP). A compositionally biased stretch (basic residues) spans 109–123 (GKKKATSPGRRRKRP). An SLX1-type zinc finger spans residues 234-289 (CGVCKNPADMSSSLILVCPIEACQTVSHLSCLSNKFLTEGGELETLVPLEGTCPGC). The disordered stretch occupies residues 317–366 (KPKRKRKSDNPAESDAADGQALEQEDEELDETWMEDMSQDEEPSPVKKSR). Acidic residues predominate over residues 339–359 (EQEDEELDETWMEDMSQDEEP).

Belongs to the SLX1 family. As to quaternary structure, forms a heterodimer with SLX4. It depends on a divalent metal cation as a cofactor.

Its subcellular location is the nucleus. In terms of biological role, catalytic subunit of the SLX1-SLX4 structure-specific endonuclease that resolves DNA secondary structures generated during DNA repair and recombination. Has endonuclease activity towards branched DNA substrates, introducing single-strand cuts in duplex DNA close to junctions with ss-DNA. This Phaeosphaeria nodorum (strain SN15 / ATCC MYA-4574 / FGSC 10173) (Glume blotch fungus) protein is Structure-specific endonuclease subunit SLX1.